The sequence spans 307 residues: Mitochondrial thiamine pyrophosphate carrier 1 (307 aa).

Solcar repeat units lie at residues 13-95 (VSTT…IGSF), 105-190 (SPQL…IKIF), and 203-305 (PFTL…FMNK). A run of 6 helical transmembrane segments spans residues 19-36 (LVAGSLSGLFARTCIAPL), 76-96 (IMYIIYGGAQFGSYTYIGSFL), 108-126 (LYSCLVGSLAGMTSSLASY), 160-184 (MGFFSGCGSSMINIGLNTAIMFGVY), 210-226 (LAGPISGFTSKLATFPL), and 280-297 (GVTMSLIKSVPSTAISLW).

Belongs to the mitochondrial carrier (TC 2.A.29) family.

It is found in the mitochondrion inner membrane. Its function is as follows. Mitochondrial transporter that mediates uptake of thiamine pyrophosphate (ThPP) into mitochondria. The chain is Mitochondrial thiamine pyrophosphate carrier 1 (TPC1) from Candida glabrata (strain ATCC 2001 / BCRC 20586 / JCM 3761 / NBRC 0622 / NRRL Y-65 / CBS 138) (Yeast).